Consider the following 340-residue polypeptide: Probable dual-specificity RNA methyltransferase RlmN (340 aa).

Catalysis depends on E91, which acts as the Proton acceptor. Residues 97–326 (HSGRVTACIS…CEIRKEKGTD (230 aa)) enclose the Radical SAM core domain. A disulfide bridge links C104 with C331. 3 residues coordinate [4Fe-4S] cluster: C111, C115, and C118. Residues 158 to 159 (GE), S190, 213 to 215 (SLH), and N289 each bind S-adenosyl-L-methionine. The active-site S-methylcysteine intermediate is the C331.

This sequence belongs to the radical SAM superfamily. RlmN family. [4Fe-4S] cluster is required as a cofactor.

It is found in the cytoplasm. The enzyme catalyses adenosine(2503) in 23S rRNA + 2 reduced [2Fe-2S]-[ferredoxin] + 2 S-adenosyl-L-methionine = 2-methyladenosine(2503) in 23S rRNA + 5'-deoxyadenosine + L-methionine + 2 oxidized [2Fe-2S]-[ferredoxin] + S-adenosyl-L-homocysteine. It catalyses the reaction adenosine(37) in tRNA + 2 reduced [2Fe-2S]-[ferredoxin] + 2 S-adenosyl-L-methionine = 2-methyladenosine(37) in tRNA + 5'-deoxyadenosine + L-methionine + 2 oxidized [2Fe-2S]-[ferredoxin] + S-adenosyl-L-homocysteine. Specifically methylates position 2 of adenine 2503 in 23S rRNA and position 2 of adenine 37 in tRNAs. This is Probable dual-specificity RNA methyltransferase RlmN from Thermosipho melanesiensis (strain DSM 12029 / CIP 104789 / BI429).